We begin with the raw amino-acid sequence, 360 residues long: Cytokine receptor-like factor 2 (360 aa).

The first 18 residues, 1–18 (MRAVTWAIVAMLLPRVLG), serve as a signal peptide directing secretion. The Extracellular segment spans residues 27–238 (TGGVGDTLSV…PRTPGTPTPP (212 aa)). Asn-62 carries N-linked (GlcNAc...) asparagine glycosylation. An intrachain disulfide couples Cys-77 to Cys-90. In terms of domain architecture, Fibronectin type-III spans 123 to 214 (RPRPPWNVTL…PSKWTGVASL (92 aa)). 2 N-linked (GlcNAc...) asparagine glycosylation sites follow: Asn-129 and Asn-174. An intrachain disulfide couples Cys-185 to Cys-223. The WSXWS motif motif lies at 205 to 209 (PSKWT). Residues 239-259 (LALACGLAVALLTLVLLLALL) traverse the membrane as a helical segment. The Cytoplasmic portion of the chain corresponds to 260–360 (RMRRVKEALL…LMGDSGYTTL (101 aa)). A Box 1 motif motif is present at residues 268-276 (LLPGVPDPR).

Belongs to the type I cytokine receptor family. Type 5 subfamily. As to quaternary structure, heterodimer of CRLF2 and IL7R. Expressed in all tissues examined including brain, thymus, lung, heart, muscle, stomach, small intestine, liver, kidney, spleen, testis and skin. Highest levels in thymus, liver and testis.

The protein localises to the membrane. Its function is as follows. Receptor for thymic stromal lymphopoietin (TSLP). Forms a functional complex with TSLP and IL7R which is capable of stimulating cell proliferation through activation of STAT3 and STAT5. Also activates JAK2. Implicated in the development of the hematopoietic system. This Rattus norvegicus (Rat) protein is Cytokine receptor-like factor 2 (Crlf2).